The primary structure comprises 442 residues: MPRARRKFYIHTFGCQMNQADSGIITALLEKEGYQQAASEEEAGIIMLNTCAVRENAVERISHYLQHVKGFKRKCPELIVGLTGCIPQYRREELFTVFPVIDFLAGPDTYRVLPALIAEAGDSRSARLEFNAFETYDGVRQARTQSLNAFVPIIRGCNNMCAFCVVPFTRGRERSHPFESVLDEVRALADDGCREITLLGQNVNSYHDPASGADFSRLLDAVSREAPETRIRFTTSHPKDMSHSLVETMALRPNICNHLHLPVQSGSTRMLARMNRGHDIEEYRNKIELLRKWIPGISLSTDLIAGFCGESEADHDQTLELMREVRFDSVFMFYYSVRQGTLAARTMPDDVPEEVKKQRLQEIIDLQNGISAELLGLAPGSVVEVLVESESRRSSDQLMGRTDGNRVVVFDRGIHQPGDLVRVMITGSTSATLFGQSAENLQ.

The MTTase N-terminal domain maps to 6–122 (RKFYIHTFGC…LPALIAEAGD (117 aa)). 6 residues coordinate [4Fe-4S] cluster: Cys15, Cys51, Cys85, Cys157, Cys161, and Cys164. Residues 143 to 373 (RTQSLNAFVP…IDLQNGISAE (231 aa)) enclose the Radical SAM core domain. Residues 376-439 (GLAPGSVVEV…SATLFGQSAE (64 aa)) enclose the TRAM domain.

Belongs to the methylthiotransferase family. MiaB subfamily. As to quaternary structure, monomer. Requires [4Fe-4S] cluster as cofactor.

It localises to the cytoplasm. It carries out the reaction N(6)-dimethylallyladenosine(37) in tRNA + (sulfur carrier)-SH + AH2 + 2 S-adenosyl-L-methionine = 2-methylsulfanyl-N(6)-dimethylallyladenosine(37) in tRNA + (sulfur carrier)-H + 5'-deoxyadenosine + L-methionine + A + S-adenosyl-L-homocysteine + 2 H(+). Its function is as follows. Catalyzes the methylthiolation of N6-(dimethylallyl)adenosine (i(6)A), leading to the formation of 2-methylthio-N6-(dimethylallyl)adenosine (ms(2)i(6)A) at position 37 in tRNAs that read codons beginning with uridine. The sequence is that of tRNA-2-methylthio-N(6)-dimethylallyladenosine synthase from Chlorobium phaeobacteroides (strain DSM 266 / SMG 266 / 2430).